We begin with the raw amino-acid sequence, 338 residues long: Ketol-acid reductoisomerase (NADP(+)) (338 aa).

Residues 1 to 181 form the KARI N-terminal Rossmann domain; the sequence is MQIFYDKDCD…GGGRTGIIET (181 aa). Residues 24-27, Arg47, Ser50, Ser52, and 82-85 each bind NADP(+); these read YGSQ and DEFQ. His107 is an active-site residue. Gly133 provides a ligand contact to NADP(+). In terms of domain architecture, KARI C-terminal knotted spans 182-327; the sequence is SFREETETDL…SKLRAMMPWI (146 aa). Residues Asp190, Glu194, Glu226, and Glu230 each coordinate Mg(2+). Ser251 is a binding site for substrate.

The protein belongs to the ketol-acid reductoisomerase family. Mg(2+) is required as a cofactor.

The enzyme catalyses (2R)-2,3-dihydroxy-3-methylbutanoate + NADP(+) = (2S)-2-acetolactate + NADPH + H(+). It catalyses the reaction (2R,3R)-2,3-dihydroxy-3-methylpentanoate + NADP(+) = (S)-2-ethyl-2-hydroxy-3-oxobutanoate + NADPH + H(+). It functions in the pathway amino-acid biosynthesis; L-isoleucine biosynthesis; L-isoleucine from 2-oxobutanoate: step 2/4. The protein operates within amino-acid biosynthesis; L-valine biosynthesis; L-valine from pyruvate: step 2/4. Its function is as follows. Involved in the biosynthesis of branched-chain amino acids (BCAA). Catalyzes an alkyl-migration followed by a ketol-acid reduction of (S)-2-acetolactate (S2AL) to yield (R)-2,3-dihydroxy-isovalerate. In the isomerase reaction, S2AL is rearranged via a Mg-dependent methyl migration to produce 3-hydroxy-3-methyl-2-ketobutyrate (HMKB). In the reductase reaction, this 2-ketoacid undergoes a metal-dependent reduction by NADPH to yield (R)-2,3-dihydroxy-isovalerate. The sequence is that of Ketol-acid reductoisomerase (NADP(+)) from Acinetobacter baylyi (strain ATCC 33305 / BD413 / ADP1).